A 367-amino-acid polypeptide reads, in one-letter code: Porin Omp2a (367 aa).

The N-terminal stretch at Met-1–Ala-22 is a signal peptide.

Belongs to the alphaproteobacteria porin family. In terms of assembly, monomer.

It localises to the cell outer membrane. Its function is as follows. Forms passive diffusion pores that allow small molecular weight hydrophilic materials across the outer membrane. This chain is Porin Omp2a (omp2a), found in Brucella melitensis biotype 1 (strain ATCC 23456 / CCUG 17765 / NCTC 10094 / 16M).